A 366-amino-acid chain; its full sequence is Galactose-1-phosphate uridylyltransferase (366 aa).

Ser27 carries the phosphoserine modification. Residues Cys54 and Cys57 each coordinate Zn(2+). UDP-alpha-D-glucose contacts are provided by residues Ala63 and 79-80; that span reads ND. His124 is a binding site for Zn(2+). Asn169 lines the UDP-alpha-D-glucose pocket. His180 provides a ligand contact to Zn(2+). His182 functions as the Tele-UMP-histidine intermediate in the catalytic mechanism. Residue Gln184 coordinates UDP-alpha-D-glucose. Glu198, His297, His314, and His316 together coordinate Fe cation. UDP-alpha-D-glucose contacts are provided by residues 329 to 332 and 334 to 335; these read KFLV and FE.

Belongs to the galactose-1-phosphate uridylyltransferase type 1 family. As to quaternary structure, homodimer. Requires Zn(2+) as cofactor.

It carries out the reaction alpha-D-galactose 1-phosphate + UDP-alpha-D-glucose = alpha-D-glucose 1-phosphate + UDP-alpha-D-galactose. Its pathway is carbohydrate metabolism; galactose metabolism. The protein is Galactose-1-phosphate uridylyltransferase (GAL7) of Saccharomyces cerevisiae (strain ATCC 204508 / S288c) (Baker's yeast).